Consider the following 367-residue polypeptide: 3-methyl-2-oxobutanoate dehydrogenase subunit alpha (367 aa).

Residues 99–101 (QYR), 141–142 (PI), 170–176 (GDGATSE), 200–204 (NQWAI), and His-269 contribute to the thiamine diphosphate site. Residue Tyr-100 coordinates substrate. Residues Asp-171 and Asn-200 each contribute to the Mg(2+) site.

Heteromer of E1 alpha (BkdA) and beta (BkdB) subunits. Part of the BCKADH complex, consisting of multiple copies of BkdA/BkdB (E1), BkdC (E2) and Lpd (E3). Mg(2+) serves as cofactor. Thiamine diphosphate is required as a cofactor.

The catalysed reaction is N(6)-[(R)-lipoyl]-L-lysyl-[protein] + 3-methyl-2-oxobutanoate + H(+) = N(6)-[(R)-S(8)-2-methylpropanoyldihydrolipoyl]-L-lysyl-[protein] + CO2. Its function is as follows. Component of the branched-chain alpha-ketoacid dehydrogenase (BCKADH) complex, that catalyzes the overall conversion of branched-chain alpha-ketoacids to acyl-CoA and CO(2). The sequence is that of 3-methyl-2-oxobutanoate dehydrogenase subunit alpha (bkdA) from Mycobacterium tuberculosis (strain CDC 1551 / Oshkosh).